Reading from the N-terminus, the 66-residue chain is ATP synthase F(0) complex subunit 8 (66 aa).

Residues 8–24 (TWLTMILSMFLTLFIIF) form a helical membrane-spanning segment. Position 54 is an N6-acetyllysine; alternate (Lys-54). An N6-succinyllysine; alternate modification is found at Lys-54. At Lys-57 the chain carries N6-acetyllysine.

It belongs to the ATPase protein 8 family. Component of the ATP synthase complex composed at least of ATP5F1A/subunit alpha, ATP5F1B/subunit beta, ATP5MC1/subunit c (homooctomer), MT-ATP6/subunit a, MT-ATP8/subunit 8, ATP5ME/subunit e, ATP5MF/subunit f, ATP5MG/subunit g, ATP5MK/subunit k, ATP5MJ/subunit j, ATP5F1C/subunit gamma, ATP5F1D/subunit delta, ATP5F1E/subunit epsilon, ATP5PF/subunit F6, ATP5PB/subunit b, ATP5PD/subunit d, ATP5PO/subunit OSCP. ATP synthase complex consists of a soluble F(1) head domain (subunits alpha(3) and beta(3)) - the catalytic core - and a membrane F(0) domain - the membrane proton channel (subunits c, a, 8, e, f, g, k and j). These two domains are linked by a central stalk (subunits gamma, delta, and epsilon) rotating inside the F1 region and a stationary peripheral stalk (subunits F6, b, d, and OSCP). Interacts with PRICKLE3.

It is found in the mitochondrion membrane. Subunit 8, of the mitochondrial membrane ATP synthase complex (F(1)F(0) ATP synthase or Complex V) that produces ATP from ADP in the presence of a proton gradient across the membrane which is generated by electron transport complexes of the respiratory chain. ATP synthase complex consist of a soluble F(1) head domain - the catalytic core - and a membrane F(1) domain - the membrane proton channel. These two domains are linked by a central stalk rotating inside the F(1) region and a stationary peripheral stalk. During catalysis, ATP synthesis in the catalytic domain of F(1) is coupled via a rotary mechanism of the central stalk subunits to proton translocation. In vivo, can only synthesize ATP although its ATP hydrolase activity can be activated artificially in vitro. Part of the complex F(0) domain. The protein is ATP synthase F(0) complex subunit 8 of Bos mutus grunniens (Wild yak).